The following is a 491-amino-acid chain: Ketol-acid reductoisomerase (NADP(+)) (491 aa).

One can recognise a KARI N-terminal Rossmann domain in the interval 14–208 (LDQLGRCRFM…GGHRAGVLES (195 aa)). NADP(+)-binding positions include 45 to 48 (CGAQ), Arg68, Arg76, Ser78, and 108 to 110 (DKQ). The active site involves His132. Gly158 is a binding site for NADP(+). 2 KARI C-terminal knotted domains span residues 209-344 (SFVA…NAPK) and 345-485 (YEGK…MTDM). Residues Asp217, Glu221, Glu389, and Glu393 each coordinate Mg(2+). Ser414 contributes to the substrate binding site.

This sequence belongs to the ketol-acid reductoisomerase family. Requires Mg(2+) as cofactor.

It carries out the reaction (2R)-2,3-dihydroxy-3-methylbutanoate + NADP(+) = (2S)-2-acetolactate + NADPH + H(+). The catalysed reaction is (2R,3R)-2,3-dihydroxy-3-methylpentanoate + NADP(+) = (S)-2-ethyl-2-hydroxy-3-oxobutanoate + NADPH + H(+). The protein operates within amino-acid biosynthesis; L-isoleucine biosynthesis; L-isoleucine from 2-oxobutanoate: step 2/4. It participates in amino-acid biosynthesis; L-valine biosynthesis; L-valine from pyruvate: step 2/4. Involved in the biosynthesis of branched-chain amino acids (BCAA). Catalyzes an alkyl-migration followed by a ketol-acid reduction of (S)-2-acetolactate (S2AL) to yield (R)-2,3-dihydroxy-isovalerate. In the isomerase reaction, S2AL is rearranged via a Mg-dependent methyl migration to produce 3-hydroxy-3-methyl-2-ketobutyrate (HMKB). In the reductase reaction, this 2-ketoacid undergoes a metal-dependent reduction by NADPH to yield (R)-2,3-dihydroxy-isovalerate. This is Ketol-acid reductoisomerase (NADP(+)) from Pasteurella multocida (strain Pm70).